A 243-amino-acid chain; its full sequence is Adenosylcobinamide-GDP ribazoletransferase (243 aa).

The next 5 membrane-spanning stretches (helical) occupy residues 31–51 (LLFY…FNAL), 55–75 (APLL…SGGL), 109–129 (IAVV…VALI), 135–155 (IGLL…FLGT), and 188–208 (VVLA…CFYW).

This sequence belongs to the CobS family. The cofactor is Mg(2+).

The protein localises to the cell inner membrane. The catalysed reaction is alpha-ribazole + adenosylcob(III)inamide-GDP = adenosylcob(III)alamin + GMP + H(+). It catalyses the reaction alpha-ribazole 5'-phosphate + adenosylcob(III)inamide-GDP = adenosylcob(III)alamin 5'-phosphate + GMP + H(+). It participates in cofactor biosynthesis; adenosylcobalamin biosynthesis; adenosylcobalamin from cob(II)yrinate a,c-diamide: step 7/7. In terms of biological role, joins adenosylcobinamide-GDP and alpha-ribazole to generate adenosylcobalamin (Ado-cobalamin). Also synthesizes adenosylcobalamin 5'-phosphate from adenosylcobinamide-GDP and alpha-ribazole 5'-phosphate. The protein is Adenosylcobinamide-GDP ribazoletransferase of Pseudomonas syringae pv. tomato (strain ATCC BAA-871 / DC3000).